The chain runs to 142 residues: Large ribosomal subunit protein bL27m (142 aa).

The disordered stretch occupies residues 27-48 (TKKSAGSTKNGRTSQPKNLGLK). Over residues 30–43 (SAGSTKNGRTSQPK) the composition is skewed to polar residues.

The protein belongs to the bacterial ribosomal protein bL27 family.

The protein resides in the mitochondrion. The polypeptide is Large ribosomal subunit protein bL27m (mrpl27) (Dictyostelium discoideum (Social amoeba)).